We begin with the raw amino-acid sequence, 245 residues long: GTP cyclohydrolase 1 type 2 homolog (245 aa).

Residues His63, His64, Asp100, His213, and Glu217 each coordinate a divalent metal cation.

It belongs to the GTP cyclohydrolase I type 2/NIF3 family. Homohexamer.

This is GTP cyclohydrolase 1 type 2 homolog from Archaeoglobus fulgidus (strain ATCC 49558 / DSM 4304 / JCM 9628 / NBRC 100126 / VC-16).